Reading from the N-terminus, the 140-residue chain is Large-conductance mechanosensitive channel (140 aa).

2 consecutive transmembrane segments (helical) span residues 16–36 and 86–106; these read VVDL…VDSI and GSFL…FLMV.

This sequence belongs to the MscL family. As to quaternary structure, homopentamer.

It is found in the cell inner membrane. In terms of biological role, channel that opens in response to stretch forces in the membrane lipid bilayer. May participate in the regulation of osmotic pressure changes within the cell. This Anaeromyxobacter sp. (strain K) protein is Large-conductance mechanosensitive channel.